A 328-amino-acid chain; its full sequence is Embigin (328 aa).

A signal peptide spans Met-1–Gly-33. Topologically, residues Asp-34–Pro-264 are extracellular. 9 N-linked (GlcNAc...) asparagine glycosylation sites follow: Asn-55, Asn-62, Asn-75, Asn-100, Asn-117, Asn-189, Asn-196, Asn-214, and Asn-219. Ig-like domains are found at residues Glu-67–Lys-160 and Pro-159–Val-254. 2 cysteine pairs are disulfide-bonded: Cys-88–Cys-144 and Cys-180–Cys-238. Residues Phe-265 to Tyr-285 form a helical membrane-spanning segment. Over Thr-286–Gln-328 the chain is Cytoplasmic. Residues Lys-289–Asp-309 are compositionally biased toward basic and acidic residues. A disordered region spans residues Lys-289–Gln-328. Residue Ser-310 is modified to Phosphoserine.

In terms of assembly, interacts with SLC16A1, SLC16A6 and SLC16A7. Post-translationally, N-glycosylated. In terms of tissue distribution, detected in prostate, mammary gland and erythrocytes (at protein level). Detected in testis, brain, prostate, heart, kidney, liver, mammary gland and lung.

It is found in the cell membrane. The protein resides in the synapse. Functionally, plays a role in the outgrowth of motoneurons and in the formation of neuromuscular junctions. Following muscle denervation, promotes nerve terminal sprouting and the formation of additional acetylcholine receptor clusters at synaptic sites without affecting terminal Schwann cell number or morphology. Delays the retraction of terminal sprouts following re-innervation of denervated endplates. Plays a role in targeting the monocarboxylate transporters SLC16A1, SLC16A6 and SLC16A7 to the cell membrane. This Rattus norvegicus (Rat) protein is Embigin (Emb).